Here is a 139-residue protein sequence, read N- to C-terminus: MLDHSEKVLLVDSETMKTRAEDMIEQNNTSVNDKKKTCADCGTSKTPLWRGGPVGPKSLCNACGIRNRKKRRGGTEDNKKLKKSSSGGGNRKFGESLKQSLMDLGIRKRSTVEKQRQKLGEEEQAAVLLMALSYGSVYA.

The GATA-type zinc-finger motif lies at 32–86 (NDKKKTCADCGTSKTPLWRGGPVGPKSLCNACGIRNRKKRRGGTEDNKKLKKSSS). Residues 67–98 (NRKKRRGGTEDNKKLKKSSSGGGNRKFGESLK) are disordered.

The protein belongs to the type IV zinc-finger family. Class B subfamily.

Its subcellular location is the nucleus. In terms of biological role, transcriptional regulator that specifically binds 5'-GATA-3' or 5'-GAT-3' motifs within gene promoters. This is GATA transcription factor 16 (GATA16) from Arabidopsis thaliana (Mouse-ear cress).